The primary structure comprises 354 residues: Quinone-reactive Ni/Fe-hydrogenase small chain (354 aa).

A signal peptide (tat-type signal) is located at residues 1 to 36; that stretch reads MLEEKGIERRDFMKWAGAMTAMLSLPATFTPLTAKA. Positions 53, 56, 153, 186, 224, 227, 252, and 258 each coordinate [4Fe-4S] cluster. Cys267, Cys286, and Cys289 together coordinate [3Fe-4S] cluster.

Belongs to the [NiFe]/[NiFeSe] hydrogenase small subunit family. As to quaternary structure, heterodimer of a large and a small subunit. [4Fe-4S] cluster serves as cofactor. The cofactor is [3Fe-4S] cluster. Predicted to be exported by the Tat system. The position of the signal peptide cleavage has been experimentally proven.

Its subcellular location is the cell membrane. The enzyme catalyses H2 + a menaquinone = a menaquinol. The polypeptide is Quinone-reactive Ni/Fe-hydrogenase small chain (hydA) (Wolinella succinogenes (strain ATCC 29543 / DSM 1740 / CCUG 13145 / JCM 31913 / LMG 7466 / NCTC 11488 / FDC 602W) (Vibrio succinogenes)).